The sequence spans 757 residues: Tyrosine-protein kinase HTK16 (757 aa).

Residues 10-102 (WYHGKITREV…GLPCKLVDFC (93 aa)) enclose the SH2 1 domain. ANK repeat units lie at residues 115-147 (GLDT…NVNA), 151-180 (SGLT…DASA), 184-214 (NGRT…DFLK), 219-248 (NGWV…SMYP), and 252-281 (DGDT…NQPK). The 93-residue stretch at 287-379 (WLHQNLDRNG…GLPTLLQFPV (93 aa)) folds into the SH2 2 domain. Disordered regions lie at residues 381–407 (SAEN…PSRP) and 444–467 (PKLP…QKGD). A compositionally biased stretch (polar residues) spans 455-467 (EVPNSVNVGQKGD). A Protein kinase domain is found at 484–740 (ISFGKELGVG…PTFNELHSTF (257 aa)). Residues 490 to 498 (LGVGEFGSV) and lysine 516 contribute to the ATP site. The active-site Proton acceptor is the aspartate 608. Tyrosine 746 is modified (phosphotyrosine).

It belongs to the protein kinase superfamily. Tyr protein kinase family. As to expression, epithelial cells.

It carries out the reaction L-tyrosyl-[protein] + ATP = O-phospho-L-tyrosyl-[protein] + ADP + H(+). Its function is as follows. May be involved in signal transduction. The protein is Tyrosine-protein kinase HTK16 (HTK16) of Hydra vulgaris (Hydra).